The chain runs to 235 residues: Large ribosomal subunit protein uL1 (235 aa).

This sequence belongs to the universal ribosomal protein uL1 family. In terms of assembly, part of the 50S ribosomal subunit.

In terms of biological role, binds directly to 23S rRNA. The L1 stalk is quite mobile in the ribosome, and is involved in E site tRNA release. Protein L1 is also a translational repressor protein, it controls the translation of the L11 operon by binding to its mRNA. The protein is Large ribosomal subunit protein uL1 of Desulfovibrio desulfuricans (strain ATCC 27774 / DSM 6949 / MB).